The chain runs to 344 residues: N-acetyl-gamma-glutamyl-phosphate reductase (344 aa).

Cys148 is a catalytic residue.

It belongs to the NAGSA dehydrogenase family. Type 1 subfamily.

It is found in the cytoplasm. It carries out the reaction N-acetyl-L-glutamate 5-semialdehyde + phosphate + NADP(+) = N-acetyl-L-glutamyl 5-phosphate + NADPH + H(+). It participates in amino-acid biosynthesis; L-arginine biosynthesis; N(2)-acetyl-L-ornithine from L-glutamate: step 3/4. Functionally, catalyzes the NADPH-dependent reduction of N-acetyl-5-glutamyl phosphate to yield N-acetyl-L-glutamate 5-semialdehyde. This Clostridium beijerinckii (strain ATCC 51743 / NCIMB 8052) (Clostridium acetobutylicum) protein is N-acetyl-gamma-glutamyl-phosphate reductase.